We begin with the raw amino-acid sequence, 129 residues long: Glycine cleavage system H protein (129 aa).

A Lipoyl-binding domain is found at 24–106; it reads TYTVGITEHA…YAGGWIFKIK (83 aa). K65 is modified (N6-lipoyllysine).

It belongs to the GcvH family. The glycine cleavage system is composed of four proteins: P, T, L and H. (R)-lipoate is required as a cofactor.

Functionally, the glycine cleavage system catalyzes the degradation of glycine. The H protein shuttles the methylamine group of glycine from the P protein to the T protein. This chain is Glycine cleavage system H protein, found in Citrobacter koseri (strain ATCC BAA-895 / CDC 4225-83 / SGSC4696).